The chain runs to 459 residues: 1,3-beta-glucanosyltransferase gas2 (459 aa).

Positions 1–19 (MVSFTKFTLQLLSASAAFA) are cleaved as a signal peptide. N-linked (GlcNAc...) asparagine glycosylation is found at asparagine 34 and asparagine 68. A disulfide bond links cysteine 69 and cysteine 98. Tyrosine 87 contributes to the (1,3-beta-D-glucosyl)n binding site. 3 N-linked (GlcNAc...) asparagine glycosylation sites follow: asparagine 90, asparagine 104, and asparagine 146. Asparagine 155 and glutamate 156 together coordinate (1,3-beta-D-glucosyl)n. Glutamate 156 functions as the Proton donor in the catalytic mechanism. An N-linked (GlcNAc...) asparagine glycan is attached at asparagine 160. Residues aspartate 197 and arginine 202 each contribute to the (1,3-beta-D-glucosyl)n site. Cystine bridges form between cysteine 211–cysteine 350 and cysteine 235–cysteine 266. Asparagine 212, asparagine 218, and asparagine 254 each carry an N-linked (GlcNAc...) asparagine glycan. The active-site Nucleophile is glutamate 263. A glycan (N-linked (GlcNAc...) asparagine) is linked at asparagine 284. (1,3-beta-D-glucosyl)n is bound at residue tyrosine 295. 5 N-linked (GlcNAc...) asparagine glycosylation sites follow: asparagine 308, asparagine 334, asparagine 344, asparagine 354, and asparagine 370. 3 disulfides stabilise this stretch: cysteine 374–cysteine 427, cysteine 383–cysteine 449, and cysteine 402–cysteine 409. A glycan (N-linked (GlcNAc...) asparagine) is linked at asparagine 423.

This sequence belongs to the glycosyl hydrolase 72 family.

It is found in the endoplasmic reticulum lumen. It localises to the secreted. Splits internally a 1,3-beta-glucan molecule and transfers the newly generated reducing end (the donor) to the non-reducing end of another 1,3-beta-glucan molecule (the acceptor) forming a 1,3-beta linkage, resulting in the elongation of 1,3-beta-glucan chains in the cell wall. This Schizosaccharomyces pombe (strain 972 / ATCC 24843) (Fission yeast) protein is 1,3-beta-glucanosyltransferase gas2 (gas2).